The following is a 224-amino-acid chain: UPF0758 protein PLES_57141 (224 aa).

The region spanning 102-224 is the MPN domain; it reads ILESPQAVRD…PLSLAEYGWL (123 aa). Zn(2+) contacts are provided by H173, H175, and D186. A JAMM motif motif is present at residues 173–186; that stretch reads HNHPSGDARPSLAD.

Belongs to the UPF0758 family.

The protein is UPF0758 protein PLES_57141 of Pseudomonas aeruginosa (strain LESB58).